The primary structure comprises 607 residues: ENTH domain-containing protein 1 (607 aa).

An ENTH domain is found at 9–141; that stretch reads NFVKNYSDAE…MDEPLLCKER (133 aa). Residues 543 to 574 adopt a coiled-coil conformation; the sequence is EAKNSISVLLREVKRAIARLHEDLSTVIQELN.

The protein is ENTH domain-containing protein 1 (ENTHD1) of Homo sapiens (Human).